The primary structure comprises 232 residues: Phosphoribosylformylglycinamidine synthase subunit PurQ (232 aa).

Positions 2–232 constitute a Glutamine amidotransferase type-1 domain; that stretch reads KIAIIQFGGT…SMADYITENF (231 aa). Cysteine 86 acts as the Nucleophile in catalysis. Catalysis depends on residues histidine 203 and glutamate 205.

Part of the FGAM synthase complex composed of 1 PurL, 1 PurQ and 2 PurS subunits.

The protein localises to the cytoplasm. It carries out the reaction N(2)-formyl-N(1)-(5-phospho-beta-D-ribosyl)glycinamide + L-glutamine + ATP + H2O = 2-formamido-N(1)-(5-O-phospho-beta-D-ribosyl)acetamidine + L-glutamate + ADP + phosphate + H(+). It catalyses the reaction L-glutamine + H2O = L-glutamate + NH4(+). The protein operates within purine metabolism; IMP biosynthesis via de novo pathway; 5-amino-1-(5-phospho-D-ribosyl)imidazole from N(2)-formyl-N(1)-(5-phospho-D-ribosyl)glycinamide: step 1/2. Functionally, part of the phosphoribosylformylglycinamidine synthase complex involved in the purines biosynthetic pathway. Catalyzes the ATP-dependent conversion of formylglycinamide ribonucleotide (FGAR) and glutamine to yield formylglycinamidine ribonucleotide (FGAM) and glutamate. The FGAM synthase complex is composed of three subunits. PurQ produces an ammonia molecule by converting glutamine to glutamate. PurL transfers the ammonia molecule to FGAR to form FGAM in an ATP-dependent manner. PurS interacts with PurQ and PurL and is thought to assist in the transfer of the ammonia molecule from PurQ to PurL. This is Phosphoribosylformylglycinamidine synthase subunit PurQ from Methanosarcina acetivorans (strain ATCC 35395 / DSM 2834 / JCM 12185 / C2A).